Consider the following 564-residue polypeptide: Dihydroxy-acid dehydratase (564 aa).

A [2Fe-2S] cluster-binding site is contributed by cysteine 55. Residue aspartate 87 participates in Mg(2+) binding. A [2Fe-2S] cluster-binding site is contributed by cysteine 128. Mg(2+)-binding residues include aspartate 129 and lysine 130. Lysine 130 carries the post-translational modification N6-carboxylysine. Cysteine 200 provides a ligand contact to [2Fe-2S] cluster. Residue glutamate 452 coordinates Mg(2+). Catalysis depends on serine 478, which acts as the Proton acceptor.

This sequence belongs to the IlvD/Edd family. As to quaternary structure, homodimer. Requires [2Fe-2S] cluster as cofactor. The cofactor is Mg(2+).

It carries out the reaction (2R)-2,3-dihydroxy-3-methylbutanoate = 3-methyl-2-oxobutanoate + H2O. The catalysed reaction is (2R,3R)-2,3-dihydroxy-3-methylpentanoate = (S)-3-methyl-2-oxopentanoate + H2O. It functions in the pathway amino-acid biosynthesis; L-isoleucine biosynthesis; L-isoleucine from 2-oxobutanoate: step 3/4. It participates in amino-acid biosynthesis; L-valine biosynthesis; L-valine from pyruvate: step 3/4. Functions in the biosynthesis of branched-chain amino acids. Catalyzes the dehydration of (2R,3R)-2,3-dihydroxy-3-methylpentanoate (2,3-dihydroxy-3-methylvalerate) into 2-oxo-3-methylpentanoate (2-oxo-3-methylvalerate) and of (2R)-2,3-dihydroxy-3-methylbutanoate (2,3-dihydroxyisovalerate) into 2-oxo-3-methylbutanoate (2-oxoisovalerate), the penultimate precursor to L-isoleucine and L-valine, respectively. In Polaromonas naphthalenivorans (strain CJ2), this protein is Dihydroxy-acid dehydratase.